A 41-amino-acid polypeptide reads, in one-letter code: Large ribosomal subunit protein bL36B (41 aa).

It belongs to the bacterial ribosomal protein bL36 family.

This is Large ribosomal subunit protein bL36B from Haemophilus ducreyi (strain 35000HP / ATCC 700724).